The primary structure comprises 166 residues: UPF0304 protein PBPRA2768 (166 aa).

Belongs to the UPF0304 family.

The sequence is that of UPF0304 protein PBPRA2768 from Photobacterium profundum (strain SS9).